The primary structure comprises 509 residues: Sulfoacetate--CoA ligase (509 aa).

The interval 320 to 340 is disordered; that stretch reads AFSNPLDPGQRRIGSIGRPSG.

Belongs to the ATP-dependent AMP-binding enzyme family.

The protein localises to the cytoplasm. It catalyses the reaction sulfoacetate + ATP + CoA = sulfoacetyl-CoA + AMP + diphosphate. Involved in the degradation of sulfoacetate, a widespread natural product. Catalyzes the CoA- and ATP-dependent conversion of sulfoacetate to sulfoacetyl-CoA and AMP. In Cupriavidus necator (strain ATCC 17699 / DSM 428 / KCTC 22496 / NCIMB 10442 / H16 / Stanier 337) (Ralstonia eutropha), this protein is Sulfoacetate--CoA ligase.